The sequence spans 2873 residues: WD repeat-containing protein 87 (2873 aa).

WD repeat units follow at residues 108–146, 199–239, 242–283, 368–407, 415–460, 516–553, and 565–604; these read PCRF…TGLQ, TSSG…PLHS, AHQS…RRLE, SILD…CPAK, NSQD…RLEK, LSSC…SSGS, and LHLC…IGIL. Disordered stretches follow at residues 1049-1124, 1177-1199, 1392-1413, 1531-1607, and 2199-2338; these read FSLD…ESGT, DKRD…GKEA, EKKT…ERKV, SKSK…QEER, and KRKE…EEVD. Basic residues-rich tracts occupy residues 1089-1101 and 1187-1197; these read VKKH…RGLK and KLKKKHKKKGK. Over residues 1549–1574 the composition is skewed to basic and acidic residues; it reads EVSREGEEKEQQVTEEQRHIQEEHKW. Residues 1575–1586 show a composition bias toward basic residues; the sequence is ARIHRKRARAEK. 2 stretches are compositionally biased toward basic and acidic residues: residues 1587–1607 and 2204–2213; these read KRAQ…QEER and KRGDKPKEKF. Residues 2244–2276 are compositionally biased toward acidic residues; the sequence is SSEEEEEREEEEEREEEEEREEEEERKEEEEGE. Positions 2277 to 2287 are enriched in basic and acidic residues; it reads EKQVEKEEEEK. Over residues 2304–2337 the composition is skewed to acidic residues; that stretch reads EVFEEKEEIMSEEETESLSDEEEEEESCSLEEEV.

This chain is WD repeat-containing protein 87 (WDR87), found in Homo sapiens (Human).